An 89-amino-acid chain; its full sequence is Small ribosomal subunit protein uS15 (89 aa).

The protein belongs to the universal ribosomal protein uS15 family. Part of the 30S ribosomal subunit. Forms a bridge to the 50S subunit in the 70S ribosome, contacting the 23S rRNA.

Its function is as follows. One of the primary rRNA binding proteins, it binds directly to 16S rRNA where it helps nucleate assembly of the platform of the 30S subunit by binding and bridging several RNA helices of the 16S rRNA. In terms of biological role, forms an intersubunit bridge (bridge B4) with the 23S rRNA of the 50S subunit in the ribosome. This chain is Small ribosomal subunit protein uS15, found in Chloroherpeton thalassium (strain ATCC 35110 / GB-78).